Reading from the N-terminus, the 1438-residue chain is DNA polymerase III PolC-type (1438 aa).

Positions 422-578 constitute an Exonuclease domain; that stretch reads YVVFDVETTG…YDTEATAYIF (157 aa).

It belongs to the DNA polymerase type-C family. PolC subfamily.

It is found in the cytoplasm. The catalysed reaction is DNA(n) + a 2'-deoxyribonucleoside 5'-triphosphate = DNA(n+1) + diphosphate. In terms of biological role, required for replicative DNA synthesis. This DNA polymerase also exhibits 3' to 5' exonuclease activity. The chain is DNA polymerase III PolC-type from Staphylococcus aureus (strain MRSA252).